The sequence spans 156 residues: Small ribosomal subunit protein uS7 (156 aa).

This sequence belongs to the universal ribosomal protein uS7 family. In terms of assembly, part of the 30S ribosomal subunit. Contacts proteins S9 and S11.

Its function is as follows. One of the primary rRNA binding proteins, it binds directly to 16S rRNA where it nucleates assembly of the head domain of the 30S subunit. Is located at the subunit interface close to the decoding center, probably blocks exit of the E-site tRNA. The chain is Small ribosomal subunit protein uS7 from Bifidobacterium longum subsp. infantis (strain ATCC 15697 / DSM 20088 / JCM 1222 / NCTC 11817 / S12).